We begin with the raw amino-acid sequence, 238 residues long: Opacity protein opA66 (238 aa).

A signal peptide is located at residue Ala-1. 2 disordered regions span residues 88–109 and 162–183; these read NLQR…QENG and GARG…AHQE. The segment covering 168 to 183 has biased composition (polar residues); the sequence is PTVSSPYKNTQDAHQE.

The protein belongs to the opacity porin family.

Its subcellular location is the cell outer membrane. Implicated in a number of adherence functions. OPA proteins are implicated in pathogenesis and are subject to phase variation. This is Opacity protein opA66 from Neisseria gonorrhoeae.